The primary structure comprises 74 residues: Mu-Sparatoxin-Hp2 (74 aa).

The N-terminal stretch at 1-20 (MKIIVLMMMLFAAFSAVVLA) is a signal peptide. Residues 21-35 (DKSIEDAALDTVMDR) constitute a propeptide that is removed on maturation. Intrachain disulfides connect cysteine 42–cysteine 57, cysteine 49–cysteine 62, and cysteine 56–cysteine 66. Residue leucine 73 is modified to Leucine amide.

Expressed by the venom gland.

It is found in the secreted. Functionally, weakly nhibits voltage-gated sodium channels Nav1.7/SCN9A. High concentration of the toxin (3 uM) inhibits Nav1.7/SCN9A currents by 80%. The sequence is that of Mu-Sparatoxin-Hp2 from Heteropoda pingtungensis (Pingtung huntsman spider).